A 166-amino-acid chain; its full sequence is Stress response protein NhaX (166 aa).

The protein belongs to the universal stress protein A family.

The sequence is that of Stress response protein NhaX (nhaX) from Bacillus subtilis (strain 168).